An 85-amino-acid chain; its full sequence is N.vectensis toxin 6 (85 aa).

Positions 1 to 20 are cleaved as a signal peptide; that stretch reads MISFKTVIVCLFLWVVIIGA. Intrachain disulfides connect C46/C82, C48/C71, and C64/C83.

Its function is as follows. Probable toxin. The chain is N.vectensis toxin 6 from Nematostella vectensis (Starlet sea anemone).